The chain runs to 517 residues: FAD-dependent monooxygenase dmxR9 (517 aa).

Val96 and Arg162 together coordinate FAD. Catalysis depends on residues Arg243 and Tyr270. FAD-binding residues include Asp365 and Ala378.

The protein belongs to the paxM FAD-dependent monooxygenase family. It depends on FAD as a cofactor.

It functions in the pathway secondary metabolite biosynthesis. In terms of biological role, FAD-dependent monooxygenase; part of the gene cluster that mediates the biosynthesis of the dimeric xanthones cryptosporioptides. The pathway begins with the synthesis of atrochrysone thioester by the polyketide synthase dmx-nrPKS. The atrochrysone carboxyl ACP thioesterase dmxR1 then breaks the thioester bond and releases the atrochrysone carboxylic acid from dmx-nrPKS. Atrochrysone carboxylic acid is decarboxylated by the decarboxylase dmxR15, and oxidized by the anthrone oxygenase dmxR16 to yield emodin. Emodin is then reduced to emodin hydroquinone by the oxidoreductase dmxR7. A-ring reduction by the short chain dehydrogenase dmxR18, dehydration by the scytalone dehydratase-like protein dmxR17 and probable spontaneous re-oxidation, results in overall deoxygenation to chrysophanol. Baeyer-Villiger oxidation by the Baeyer-Villiger monooxygenase (BVMO) dmxR6 then yields monodictylactone in equilibrium with monodictyphenone. In the case of the cryptosporioptides biosynthesis, monodictylactone is reduced at C-12 to an alcohol (by the short chain dehydrogenases dmxR12 or dmxR8) and hydroxylated at C-5 by dmxR9, yielding the electron-rich aromatic which could eliminate H(2)O to form the ortho-quinonemethide, followed by tautomerisation to paraquinone and complete the formal reduction to produce the 10-methylgroup. Conjugate addition of C-4a-OH to the resulting paraquinone by the monooxygenase dmxR10 then gives cyclohexadienone, which is then reduced at C-5 by the short chain dehydrogenase dmxR3 to give the dihydroxanthone. The 6,7-epoxide in the cryptosporioptides could be introduced by the cytochrome P450 monooxygenase dmxL3. The highly reducing PKS dmxL2 manufactures butyrate, which is further carboxylated by dmxL1 to form ethylmalonate. It is not yet clear whether the carboxylation occurs while the butyrate is attached to the ACP of dmxL2, but this unusual fungal metabolite could then be esterified to O-5 by the O-acetyltransferase dmxR13. Finally, dimerization performed by dmxR5 gives the observed dimers cryptosporioptides A, B and C as the final products of the pathway. The chain is FAD-dependent monooxygenase dmxR9 from Cryptosporiopsis sp. (strain 8999).